A 276-amino-acid polypeptide reads, in one-letter code: Large ribosomal subunit protein uL2 (276 aa).

The disordered stretch occupies residues 219 to 276 (TVRGSAMNPNDHPHGGGEGRSPIGRPSPVTPWGKPALGYKTRKKNKHSDKFIVTGRKR).

This sequence belongs to the universal ribosomal protein uL2 family. Part of the 50S ribosomal subunit. Forms a bridge to the 30S subunit in the 70S ribosome.

One of the primary rRNA binding proteins. Required for association of the 30S and 50S subunits to form the 70S ribosome, for tRNA binding and peptide bond formation. It has been suggested to have peptidyltransferase activity; this is somewhat controversial. Makes several contacts with the 16S rRNA in the 70S ribosome. This chain is Large ribosomal subunit protein uL2, found in Alkaliphilus metalliredigens (strain QYMF).